The chain runs to 405 residues: Solute carrier family 35 member E2A (405 aa).

The tract at residues 1–22 is disordered; that stretch reads MSAAAKSQVPEEAAPGCEEEPK. The next 10 membrane-spanning stretches (helical) occupy residues 76-96, 106-126, 142-162, 167-187, 195-215, 219-241, 264-284, 296-316, 326-346, and 347-367; these read LIYLTLWFFFSFCTLFLNKYI, MLGAVQMLSTTLIGCVKIFVP, FIMTMLFVGLMRFATVVLGLV, VAVSFAETVKSSAPIFTVIMS, TGLLVNLSLIPVMGGLALCTA, SFNILGFSAALSTNIMDCLQNVF, AAAVALLIPAWTFFMDIPVIG, IVLLLLTDGALFHLQSVTAYA, FSVASTVKHALSIWLSIIVFG, and NKITSLSAIGTILVTLGVLLY. A disordered region spans residues 380–405; that stretch reads SLVTATSRNPEDDTEPLVPQDSRQHH.

Belongs to the TPT transporter family. SLC35E subfamily.

It localises to the membrane. Putative transporter. The chain is Solute carrier family 35 member E2A (Slc35e2a) from Mus musculus (Mouse).